Reading from the N-terminus, the 23-residue chain is Phallacidin proprotein 1 (23 aa).

A propeptide is located at residue proline 1. The segment at residues 2-8 is a cross-link (cyclopeptide (Ala-Pro)); the sequence is AWLVDCP. Residues 3–7 constitute a cross-link (2'-cysteinyl-6'-hydroxytryptophan sulfoxide (Trp-Cys)); that stretch reads WLVDC. The propeptide occupies 9-23; that stretch reads CVGDDVNRLLTRGER.

Belongs to the MSDIN fungal toxin family. In terms of processing, processed by the macrocyclase-peptidase enzyme POPB to yield a toxic cyclic heptapeptide. POPB first removes 10 residues from the N-terminus. Conformational trapping of the remaining peptide forces the enzyme to release this intermediate rather than proceed to macrocyclization. The enzyme rebinds the remaining peptide in a different conformation and catalyzes macrocyclization of the N-terminal 7 residues.

Functionally, toxin that belongs to the bicyclic heptapeptides called phallotoxins. Although structurally related to amatoxins, phallotoxins have a different mode of action, which is the stabilization of F-actin. Phallotoxins are poisonous when administered parenterally, but not orally because of poor absorption. The protein is Phallacidin proprotein 1 of Amanita exitialis (Guangzhou destroying angel).